Consider the following 564-residue polypeptide: Urocanate hydratase (564 aa).

Residues 58–59 (GG), Q136, 182–184 (GMG), E202, R207, 248–249 (NA), 269–273 (QTSAH), 279–280 (YL), and Y328 each bind NAD(+). C416 is a catalytic residue. G498 provides a ligand contact to NAD(+).

It belongs to the urocanase family. Requires NAD(+) as cofactor.

It localises to the cytoplasm. It catalyses the reaction 4-imidazolone-5-propanoate = trans-urocanate + H2O. It functions in the pathway amino-acid degradation; L-histidine degradation into L-glutamate; N-formimidoyl-L-glutamate from L-histidine: step 2/3. Its function is as follows. Catalyzes the conversion of urocanate to 4-imidazolone-5-propionate. The polypeptide is Urocanate hydratase (Aliivibrio salmonicida (strain LFI1238) (Vibrio salmonicida (strain LFI1238))).